Here is an 852-residue protein sequence, read N- to C-terminus: Patatin-like phospholipase domain-containing protein CaO19.1504 (852 aa).

Residues 41–52 show a composition bias toward low complexity; that stretch reads ATTDITTTPIND. Residues 41-184 form a disordered region; that stretch reads ATTDITTTPI…KKTTPTSSTS (144 aa). The span at 75-95 shows a compositional bias: polar residues; sequence INGTVSDSSSITDEDIMNSSY. Residues 101 to 110 are compositionally biased toward low complexity; that stretch reads SSTNLKSNST. Residues 113-122 show a composition bias toward acidic residues; it reads DDDDDDDDDD. Composition is skewed to low complexity over residues 129–142 and 158–171; these read SGTT…SLSS and GGSR…KGSS. Residues 207–227 traverse the membrane as a helical segment; that stretch reads WPILIFVFSWIGILGIFYFMI. The PNPLA domain maps to 396-588; the sequence is LCLSGGACFA…RTDIPIEALN (193 aa). A GXSXG motif is present at residues 427–431; the sequence is GTSGG. Serine 429 acts as the Nucleophile in catalysis. Aspartate 575 (proton acceptor) is an active-site residue. The segment at 800-840 is disordered; that stretch reads KKLLDELDNEDEEEDEEEEEVDVDDDDDDDDDSLSDSFEIT. The segment covering 805–833 has biased composition (acidic residues); it reads ELDNEDEEEDEEEEEVDVDDDDDDDDDSL.

It belongs to the PLPL family.

The protein localises to the membrane. In terms of biological role, probable lipid hydrolase. The protein is Patatin-like phospholipase domain-containing protein CaO19.1504 of Candida albicans (strain SC5314 / ATCC MYA-2876) (Yeast).